A 183-amino-acid polypeptide reads, in one-letter code: Dual specificity protein phosphatase 22-B (183 aa).

The region spanning 4 to 144 is the Tyrosine-protein phosphatase domain; that stretch reads GINKVLPDLY…LQEFQTGELQ (141 aa). The Phosphocysteine intermediate role is filled by C88.

This sequence belongs to the protein-tyrosine phosphatase family. Non-receptor class dual specificity subfamily.

It is found in the cytoplasm. The protein resides in the nucleus. It catalyses the reaction O-phospho-L-tyrosyl-[protein] + H2O = L-tyrosyl-[protein] + phosphate. The enzyme catalyses O-phospho-L-seryl-[protein] + H2O = L-seryl-[protein] + phosphate. It carries out the reaction O-phospho-L-threonyl-[protein] + H2O = L-threonyl-[protein] + phosphate. Activates the Jnk signaling pathway. Dephosphorylates and deactivates p38 and stress-activated protein kinase/c-Jun N-terminal kinase (SAPK/JNK). The sequence is that of Dual specificity protein phosphatase 22-B (dusp22b) from Danio rerio (Zebrafish).